The primary structure comprises 642 residues: MPIITLPDGSKREFANPVSTLDVALDIGPGLAKACIAGRVNGELKDATDLITADSELAIITAKDEEGVEILRHSCAHLLGHAIKQMWPETKMAIGPVIDNGFYYDIDLDHKLTHEDIEALEKRMLALAKTNYDVVKKVVSWQEARDAFDGRGEEYKIAILDENISKDATPALYHHEEYIDMCRGPHVPNMRFCQNFKLMSVAGAYWRGNSDNKMLQRVYGTAWADKKALKTHLVRLEEAAKRDHRKIGKQLDLYHMQEEAPGMVFWHNDGWSIFLELEKFIRQKLGQYTYQEVKGPLMMDRVLWERSGHWDKYAEAMFTTNSENREYAIKPMNCPGHVQIFNQGLKSYRDLPLRMAEFGCCHRNEPSGSLHGLMRVRGFTQDDAHVFCTDDQVQEEVSACIQMVYDTYATFGFDNIVVKLSTRPEKRIGDDDMWDRAEDALKQALANNNIKYEILPGEGAFYGPKIEFTLHDCLDRAWQCGTVQLDYALPTRLGATYVAEDNSRQTPVMIHRAILGSLERFIGILIEEYAGKFPTWLAPMQVVVMNITDKQADYVEEIVKFFKEQGIRASFDLRNEKIGFKIREHTLRRVPYLLVVGDQEMENKEVAVRTRDGIDLGKLKLEDFAAMIRQQISLRSLKLLEE.

In terms of domain architecture, TGS spans 1-61; the sequence is MPIITLPDGS…TADSELAIIT (61 aa). Positions 243–534 are catalytic; it reads DHRKIGKQLD…LIEEYAGKFP (292 aa). Positions 334, 385, and 511 each coordinate Zn(2+).

It belongs to the class-II aminoacyl-tRNA synthetase family. In terms of assembly, homodimer. It depends on Zn(2+) as a cofactor.

The protein localises to the cytoplasm. The catalysed reaction is tRNA(Thr) + L-threonine + ATP = L-threonyl-tRNA(Thr) + AMP + diphosphate + H(+). Catalyzes the attachment of threonine to tRNA(Thr) in a two-step reaction: L-threonine is first activated by ATP to form Thr-AMP and then transferred to the acceptor end of tRNA(Thr). Also edits incorrectly charged L-seryl-tRNA(Thr). The sequence is that of Threonine--tRNA ligase from Shewanella frigidimarina (strain NCIMB 400).